A 354-amino-acid polypeptide reads, in one-letter code: Probable protein phosphatase 2C 27 (354 aa).

A PPM-type phosphatase domain is found at 54-319 (RSGDWSDIGG…DNLTAVMVSF (266 aa)). The Mn(2+) site is built by aspartate 98, glycine 99, aspartate 267, and aspartate 310.

Belongs to the PP2C family. Requires Mg(2+) as cofactor. The cofactor is Mn(2+).

It catalyses the reaction O-phospho-L-seryl-[protein] + H2O = L-seryl-[protein] + phosphate. It carries out the reaction O-phospho-L-threonyl-[protein] + H2O = L-threonyl-[protein] + phosphate. This chain is Probable protein phosphatase 2C 27, found in Oryza sativa subsp. japonica (Rice).